Reading from the N-terminus, the 335-residue chain is MSTATSAVTVLGAGSYGTALAICLARNGHQVTLWGRNSDDVATLAAERKNQRYLPDIPFPDTLTLEADLQRAAASNEIVLVVVPSHAFGDTLKQIKPALQQGAKVAWATKGLEPNTGRLLQEVAVQELGDAIPLAVLSGPTFAKEMAMGSPTAISVSSTSTEFAQQLADLLHCGRSFRVYNNDDFIGIQLGGAVKNVIAIGAGISDGVGFGANARTALITRGLAELTRLGCALGAKPETFMGMAGLGDLILTCTDNQSRNRRFGLALGKGESVEAAIESIGQVVEGFRNTKEVYLLAQRSGVEMPITEQIYKVLYENKDMKEAAMALLGREQRSE.

4 residues coordinate NADPH: S15, Y16, R36, and K110. The sn-glycerol 3-phosphate site is built by K110, G139, and T141. A143 serves as a coordination point for NADPH. 5 residues coordinate sn-glycerol 3-phosphate: K195, D248, S258, R259, and N260. The active-site Proton acceptor is K195. R259 lines the NADPH pocket. Positions 283 and 285 each coordinate NADPH.

It belongs to the NAD-dependent glycerol-3-phosphate dehydrogenase family.

The protein localises to the cytoplasm. The catalysed reaction is sn-glycerol 3-phosphate + NAD(+) = dihydroxyacetone phosphate + NADH + H(+). The enzyme catalyses sn-glycerol 3-phosphate + NADP(+) = dihydroxyacetone phosphate + NADPH + H(+). The protein operates within membrane lipid metabolism; glycerophospholipid metabolism. Functionally, catalyzes the reduction of the glycolytic intermediate dihydroxyacetone phosphate (DHAP) to sn-glycerol 3-phosphate (G3P), the key precursor for phospholipid synthesis. This chain is Glycerol-3-phosphate dehydrogenase [NAD(P)+], found in Pseudoalteromonas translucida (strain TAC 125).